The sequence spans 532 residues: Probable pectinesterase/pectinesterase inhibitor 39 (532 aa).

An N-terminal signal peptide occupies residues Met1–Ser34. The pectinesterase inhibitor 39 stretch occupies residues Gln35–Ile169. N-linked (GlcNAc...) asparagine glycans are attached at residues Asn62, Asn74, Asn85, Asn172, Asn221, Asn231, Asn244, and Asn287. Positions Asn221–Ser518 are pectinesterase 39. Substrate-binding residues include Thr296 and Gln326. Asp349 functions as the Proton donor; for pectinesterase activity in the catalytic mechanism. Catalysis depends on Asp370, which acts as the Nucleophile; for pectinesterase activity. Asn382 and Asn404 each carry an N-linked (GlcNAc...) asparagine glycan. The substrate site is built by Arg438 and Trp440. N-linked (GlcNAc...) asparagine glycosylation is found at Asn502 and Asn522.

In the N-terminal section; belongs to the PMEI family. The protein in the C-terminal section; belongs to the pectinesterase family. As to expression, expressed in siliques but not in flower buds.

The protein resides in the secreted. Its subcellular location is the cell wall. The enzyme catalyses [(1-&gt;4)-alpha-D-galacturonosyl methyl ester](n) + n H2O = [(1-&gt;4)-alpha-D-galacturonosyl](n) + n methanol + n H(+). It functions in the pathway glycan metabolism; pectin degradation; 2-dehydro-3-deoxy-D-gluconate from pectin: step 1/5. In terms of biological role, acts in the modification of cell walls via demethylesterification of cell wall pectin. This is Probable pectinesterase/pectinesterase inhibitor 39 (PME39) from Arabidopsis thaliana (Mouse-ear cress).